The primary structure comprises 427 residues: ATP-sensitive inward rectifier potassium channel 12 (427 aa).

Topologically, residues 1 to 77 are cytoplasmic; that stretch reads MTAASRANPY…LADMFTTCVD (77 aa). C75 bears the S-nitrosocysteine mark. A helical membrane pass occupies residues 78–104; the sequence is IRWRYMLLIFSLAFLASWLLFGIIFWV. The a 1,2-diacyl-sn-glycero-3-phospho-(1D-myo-inositol-4,5-bisphosphate) site is built by R79 and R81. Topologically, residues 105 to 129 are extracellular; it reads IAVAHGDLEPAEGRGRTPCVLQVHG. An intrachain disulfide couples C123 to C155. Residues 130–146 constitute an intramembrane region (helical; Pore-forming); that stretch reads FMAAFLFSIETQTTIGY. 4 residues coordinate K(+): T143, I144, G145, and Y146. Positions 143–148 match the Selectivity filter motif; sequence TIGYGL. Over 147 to 155 the chain is Extracellular; the sequence is GLRCVTEEC. Residues 156–183 form a helical membrane-spanning segment; sequence PVAVFMVVAQSIVGCIIDSFMIGAIMAK. Residues K183 and K188 each coordinate a 1,2-diacyl-sn-glycero-3-phospho-(1D-myo-inositol-4,5-bisphosphate). Over 184 to 427 the chain is Cytoplasmic; that stretch reads MARPKKRAQT…ERPYRRESEI (244 aa). The segment at 387–427 is disordered; that stretch reads DEEDEVATDRDGRSPQPEHDFDRLQASSAALERPYRRESEI. Positions 393-409 are enriched in basic and acidic residues; it reads ATDRDGRSPQPEHDFDR. A PDZ-binding motif is present at residues 425-427; that stretch reads SEI.

Belongs to the inward rectifier-type potassium channel (TC 1.A.2.1) family. KCNJ12 subfamily. Homotetramer. Forms heteromer with KCNJ4. Can form heteromeric channels with Kir2.6/KCNJ18. Association, via its PDZ-recognition domain, with LIN7A, LIN7B, LIN7C, DLG1, CASK and APBA1 plays a key role in its localization and trafficking. Highest level in cerebellum.

It localises to the membrane. Its subcellular location is the cell membrane. The protein localises to the sarcolemma. It is found in the T-tubule. It catalyses the reaction K(+)(in) = K(+)(out). With respect to regulation, activated by phosphatidylinositol 4,5-biphosphate (PtdIns(4,5)P2). PtdIns(4,5)P2 binding to the cytoplasmic side of the channel triggers a conformation change leading to channel opening. Inhibited by Ba(2+). Its function is as follows. Inward rectifying potassium channel that probably participates in controlling the resting membrane potential in electrically excitable cells. It probably participates in establishing action potential waveform and excitability of neuronal and muscle tissues. Inward rectifier potassium channels are characterized by a greater tendency to allow potassium to flow into the cell rather than out of it. Their voltage dependence is regulated by the concentration of extracellular potassium; as external potassium is raised, the voltage range of the channel opening shifts to more positive voltages. The inward rectification is mainly due to the blockage of outward current by internal magnesium. The sequence is that of ATP-sensitive inward rectifier potassium channel 12 (Kcnj12) from Mus musculus (Mouse).